The sequence spans 451 residues: tRNA modification GTPase MnmE (451 aa).

Positions 28, 85, and 124 each coordinate (6S)-5-formyl-5,6,7,8-tetrahydrofolate. The 154-residue stretch at G220 to L373 folds into the TrmE-type G domain. Residue N230 coordinates K(+). Residues N230 to S235, T249 to T255, and D274 to G277 each bind GTP. Residue S234 participates in Mg(2+) binding. The K(+) site is built by T249, V251, and T254. T255 is a Mg(2+) binding site. K451 provides a ligand contact to (6S)-5-formyl-5,6,7,8-tetrahydrofolate.

Belongs to the TRAFAC class TrmE-Era-EngA-EngB-Septin-like GTPase superfamily. TrmE GTPase family. As to quaternary structure, homodimer. Heterotetramer of two MnmE and two MnmG subunits. The cofactor is K(+).

Its subcellular location is the cytoplasm. Its function is as follows. Exhibits a very high intrinsic GTPase hydrolysis rate. Involved in the addition of a carboxymethylaminomethyl (cmnm) group at the wobble position (U34) of certain tRNAs, forming tRNA-cmnm(5)s(2)U34. The sequence is that of tRNA modification GTPase MnmE from Xylella fastidiosa (strain 9a5c).